The chain runs to 848 residues: F-BAR domain only protein 2 (848 aa).

Positions 4–250 constitute an F-BAR domain; the sequence is PYFLENFWGN…NMENTSVESL (247 aa). A coiled-coil region spans residues 87 to 114; it reads HMELVRKLQELIKEVQKYVDEQAKNHKK. Disordered regions lie at residues 292 to 316 and 404 to 526; these read IPGR…NASN and LSPT…RAES. Ser-405 and Ser-417 each carry phosphoserine. Low complexity predominate over residues 445 to 460; sequence PFGPTSTGSSSSLPQS. Residues 580 to 848 form the MHD domain; it reads ALPIAVAFTE…FATGRYMADC (269 aa).

Belongs to the FCHO family. In terms of assembly, homodimer.

It localises to the membrane. Its subcellular location is the clathrin-coated pit. In terms of biological role, may function in an early step of clathrin-mediated endocytosis. This chain is F-BAR domain only protein 2 (fcho2), found in Danio rerio (Zebrafish).